A 721-amino-acid chain; its full sequence is Mitogen-activated protein kinase 6 (721 aa).

Methionine 1 is covalently cross-linked (Peptide (Met-Gly) (interchain with G-Cter in ubiquitin)). A Protein kinase domain is found at 20–316; sequence YMDLKPLGCG…AEEALSHPYM (297 aa). ATP-binding positions include 26-34 and lysine 49; that span reads LGCGGNGLV. Aspartate 152 functions as the Proton acceptor in the catalytic mechanism. Serine 189 carries the phosphoserine; by PAK1, PAK2 and PAK3 modification. Residues 189–191 carry the SEG motif motif; that stretch reads SEG. The FRIEDE motif signature appears at 332–337; the sequence is FHIEDE. A phosphoserine mark is found at serine 386, serine 452, serine 556, serine 558, serine 665, and serine 684. The segment covering 701-715 has biased composition (polar residues); the sequence is AMKSSPQIPHQTYSS. Positions 701–721 are disordered; sequence AMKSSPQIPHQTYSSILKHLN.

It belongs to the protein kinase superfamily. CMGC Ser/Thr protein kinase family. MAP kinase subfamily. As to quaternary structure, heterodimer with ERK4/MAPK4. Interacts with (via FRIEDE motif) MAPKAPK5. Interacts with UBE3A; this interaction may be indirect and mediated by HERC2, possibly via HERC2 interaction with NEURL4. Mg(2+) is required as a cofactor. Post-translationally, phosphorylated at Ser-189 by PAK1, PAK2 and PAK3 resulting in catalytic activation. Phosphorylated by MAPKAPK5 at other sites. In terms of processing, ubiquitination at Met-1 leads to degradation by the proteasome pathway. Highest expression in the skeletal muscle, followed by the brain. Also found in heart, placenta, lung, liver, pancreas, kidney and skin fibroblasts.

It is found in the cytoplasm. Its subcellular location is the nucleus. The catalysed reaction is L-seryl-[protein] + ATP = O-phospho-L-seryl-[protein] + ADP + H(+). It carries out the reaction L-threonyl-[protein] + ATP = O-phospho-L-threonyl-[protein] + ADP + H(+). Activated by phosphorylation at Ser-189. Its function is as follows. Atypical MAPK protein. Phosphorylates microtubule-associated protein 2 (MAP2) and MAPKAPK5. The precise role of the complex formed with MAPKAPK5 is still unclear, but the complex follows a complex set of phosphorylation events: upon interaction with atypical MAPKAPK5, ERK3/MAPK6 is phosphorylated at Ser-189 and then mediates phosphorylation and activation of MAPKAPK5, which in turn phosphorylates ERK3/MAPK6. May promote entry in the cell cycle. The sequence is that of Mitogen-activated protein kinase 6 (MAPK6) from Homo sapiens (Human).